The sequence spans 190 residues: Proline-rich protein 3 (190 aa).

3 disordered regions span residues Met1–Pro94, Pro110–Arg130, and Lys142–Pro161. Pro residues predominate over residues Met37–Met48. Residues Lys157–Val185 form a C3H1-type zinc finger.

The chain is Proline-rich protein 3 (Prr3) from Mus musculus (Mouse).